Here is an 803-residue protein sequence, read N- to C-terminus: Palmitoyl thioesterase CPT1C (803 aa).

Residues methionine 1 to threonine 52 are Cytoplasmic-facing. The helical transmembrane segment at glycine 53–leucine 75 threads the bilayer. Over glutamine 76 to glycine 103 the chain is Lumenal. A helical membrane pass occupies residues valine 104–leucine 126. Residues arginine 127–phenylalanine 803 lie on the Cytoplasmic side of the membrane. Histidine 470 serves as the catalytic Proton acceptor. Glycine 552–aspartate 564 lines the CoA pocket. The (R)-carnitine site is built by tyrosine 586, serine 588, and threonine 599. The segment at leucine 761–phenylalanine 803 is required for interaction with GRIA1. A disordered region spans residues phenylalanine 772 to phenylalanine 803. Residues serine 788–phenylalanine 803 are compositionally biased toward polar residues.

This sequence belongs to the carnitine/choline acetyltransferase family. Peripherally associated with AMPAR complex. AMPAR complex consists of an inner core made of 4 pore-forming GluA/GRIA proteins (GRIA1, GRIA2, GRIA3 and GRIA4) and 4 major auxiliary subunits arranged in a twofold symmetry. One of the two pairs of distinct binding sites is occupied either by CNIH2, CNIH3 or CACNG2, CACNG3. The other harbors CACNG2, CACNG3, CACNG4, CACNG8 or GSG1L. This inner core of AMPAR complex is complemented by outer core constituents binding directly to the GluA/GRIA proteins at sites distinct from the interaction sites of the inner core constituents. Outer core constituents include at least PRRT1, PRRT2, CKAMP44/SHISA9, FRRS1L and NRN1. The proteins of the inner and outer core serve as a platform for other, more peripherally associated AMPAR constituents, including CPT1C. Alone or in combination, these auxiliary subunits control the gating and pharmacology of the AMPAR complex and profoundly impact their biogenesis and protein processing. Interacts with SACM1L; the interaction regulates SACM1L phosphatidylinositol-3-phosphatase activity and translocation to endoplasmic reticulum/trans Golgi network in a malonyl-CoA dependent manner. Interacts with ATL1. In terms of tissue distribution, expressed predominantly in brain and testis. Expressed in motor neurons.

The protein resides in the cell projection. It localises to the dendrite. The protein localises to the axon. It is found in the endoplasmic reticulum membrane. It carries out the reaction S-hexadecanoyl-L-cysteinyl-[protein] + H2O = L-cysteinyl-[protein] + hexadecanoate + H(+). Palmitoyl thioesterase specifically expressed in the endoplasmic reticulum of neurons. Modulates the trafficking of the glutamate receptor, AMPAR, to plasma membrane through depalmitoylation of GRIA1. Also regulates AMPR trafficking through the regulation of SACM1L phosphatidylinositol-3-phosphatase activity by interaction in a malonyl-CoA dependent manner. Binds malonyl-CoA and couples malonyl-CoA to ceramide levels, necessary for proper spine maturation and contributing to systemic energy homeostasis and appetite control. Binds to palmitoyl-CoA, but does not have carnitine palmitoyltransferase 1 catalytic activity or at very low levels. This Homo sapiens (Human) protein is Palmitoyl thioesterase CPT1C.